Reading from the N-terminus, the 98-residue chain is Small ribosomal subunit protein bS6 (98 aa).

This sequence belongs to the bacterial ribosomal protein bS6 family.

Its function is as follows. Binds together with bS18 to 16S ribosomal RNA. The chain is Small ribosomal subunit protein bS6 from Lactobacillus acidophilus (strain ATCC 700396 / NCK56 / N2 / NCFM).